Consider the following 70-residue polypeptide: Phycocyanin-645 alpha-2 chain (70 aa).

(2R,3E)-phycocyanobilin is bound at residue R16. Residues C18, Y26, and K41 each coordinate mesobiliverdin.

The protein belongs to the phycoerythrin family. Heterotetramer of 2 different alpha chains and 2 identical beta chains which form 2 alpha-beta heterodimers within the heterotetramer. In terms of processing, contains one phycocyanobilin chromophore, one mesobiliverdin chromophore and one 15,16-dihydrobiliverdin chromophore with binding mediated by both the alpha and beta subunits.

Its subcellular location is the plastid. The protein localises to the chloroplast thylakoid membrane. Its function is as follows. Light-harvesting photosynthetic tetrapyrrole chromophore-protein from the phycobiliprotein complex. The chain is Phycocyanin-645 alpha-2 chain from Chroomonas sp.